We begin with the raw amino-acid sequence, 443 residues long: EGF-containing fibulin-like extracellular matrix protein 2 (443 aa).

A signal peptide spans 1 to 25 (MLPFASCLPGSLLLWALLLLLLGAA). An EGF-like 1; atypical domain is found at 36–81 (YTECTDGYEWDADSQHCRDVNECLTIPEACKGEMKCINHYGGYLCL). Intrachain disulfides connect Cys58/Cys121, Cys65/Cys80, Cys71/Cys109, Cys127/Cys140, Cys134/Cys149, Cys151/Cys162, Cys168/Cys177, Cys173/Cys186, Cys188/Cys201, Cys207/Cys217, Cys213/Cys226, Cys228/Cys241, Cys247/Cys258, Cys254/Cys267, Cys269/Cys281, Cys287/Cys300, Cys294/Cys309, and Cys315/Cys327. The EGF-like 2; calcium-binding domain maps to 123–163 (DVDECAQALHDCRPSQDCHNLPGSYQCTCPDGYRKVGPECV). One can recognise an EGF-like 3; calcium-binding domain in the interval 164–202 (DIDECRYRYCQHRCVNLPGSFRCQCEPGFQLGPNNRSCV). Asn198 carries N-linked (GlcNAc...) asparagine glycosylation. Positions 203–242 (DVNECDMGAPCEQRCFNSYGTFLCRCNQGYELHRDGFSCS) constitute an EGF-like 4; calcium-binding domain. In terms of domain architecture, EGF-like 5; calcium-binding spans 243–282 (DIDECSYSSYLCQYRCVNEPGRFSCHCPQGYQLLATRLCQ). The 46-residue stretch at 283–328 (DIDECETGAHQCSEAQTCVNFHGGYRCVDTNRCVEPYVQVSDNRCF) folds into the EGF-like 6; calcium-binding domain. N-linked (GlcNAc...) asparagine glycosylation occurs at Asn394.

Belongs to the fibulin family. In terms of assembly, homodimer; disulfide-linked. Multimer; allows heparin binding. Monomer. Interacts with FBN1 (via N-terminal domain); this interaction inhibits EFEMP2 binding to LOX and ELN. Interacts with LOX (via propeptide); this interaction is strong and facilitates formation of ternary complexes with ELN during elastic fiber assembly; this interaction limits interaction of EFEMP2 with FBLN5. Interacts with PITX2. Interacts with ELN with moderate affinity; this interaction regulates ELN self-assembly maturation stage. Interacts with FBLN5 with moderate affinity. Interacts with LOXL1 (via propeptide), LTBP1 and TGFB1 stronger than with LOXL2 and LTBP3. Interacts with PCOLCE. Interacts with collagen type IV trimer (COL4A1-COL4A1-COL4A2), NID2 and moderately with COL15A1-derived endostatin. Interacts with EMILIN1; this interaction promotes the incorporation of EFEMP2 into the extracellular matrix. Interacts with LTBP4; the LTBP4 long form (LTBP4L) has a stronger binding affinity than the LTBP4 short form and the LTBP4 long form promotes fibrillar deposition of EFEMP2. In terms of processing, N-glycosylated; contains mostly complex-type glycans. Not O-glycosylated. Cleaved by ELANE; produces a 50-55 kDa fragment. Cleaved by MMP2 and MMP9; produces several fragments.

It localises to the secreted. It is found in the extracellular space. The protein resides in the extracellular matrix. Its subcellular location is the basement membrane. Its function is as follows. Plays a crucial role in elastic fiber formation in tissue, and in the formation of ultrastructural connections between elastic laminae and smooth muscle cells in the aorta, therefore participates in terminal differentiation and maturation of smooth muscle cell (SMC) and in the mechanical properties and wall integrity maintenance of the aorta. In addition, is involved in the control of collagen fibril assembly in tissue throught proteolytic activation of LOX leading to cross- linking of collagen and elastin. Also promotes ELN coacervation and participates in the deposition of ELN coacervates on to microfibrils but also regulates ELN cross- linking through LOX interaction. Moreover adheres to the cells through heparin binding in a calcium-dependent manner and regulates vascularlar smooth muscle cells proliferation through angiotensin signaling. This Cricetulus griseus (Chinese hamster) protein is EGF-containing fibulin-like extracellular matrix protein 2.